A 197-amino-acid polypeptide reads, in one-letter code: Glycerol-3-phosphate acyltransferase (197 aa).

Helical transmembrane passes span 1–21, 78–98, 112–132, and 155–175; these read MNFL…FAIV, PVEA…SVFL, VLAG…LAVA, and VLLG…ILVW.

The protein belongs to the PlsY family. As to quaternary structure, probably interacts with PlsX.

The protein resides in the cell inner membrane. It carries out the reaction an acyl phosphate + sn-glycerol 3-phosphate = a 1-acyl-sn-glycero-3-phosphate + phosphate. The protein operates within lipid metabolism; phospholipid metabolism. Its function is as follows. Catalyzes the transfer of an acyl group from acyl-phosphate (acyl-PO(4)) to glycerol-3-phosphate (G3P) to form lysophosphatidic acid (LPA). This enzyme utilizes acyl-phosphate as fatty acyl donor, but not acyl-CoA or acyl-ACP. The protein is Glycerol-3-phosphate acyltransferase of Aromatoleum aromaticum (strain DSM 19018 / LMG 30748 / EbN1) (Azoarcus sp. (strain EbN1)).